The following is a 727-amino-acid chain: Platelet endothelial cell adhesion molecule (727 aa).

An N-terminal signal peptide occupies residues Met1–Ala17. The Extracellular portion of the chain corresponds to Glu18–Lys590. 6 consecutive Ig-like C2-type domains span residues Gly40–Thr126, Gly135–Ser213, Pro225–Asn309, Pro315–Ile391, Gly413–Ser472, and Pro488–Thr578. Cysteines 47 and 99 form a disulfide. N-linked (GlcNAc...) asparagine glycosylation is found at Asn74 and Asn141. 2 disulfide bridges follow: Cys142–Cys195 and Cys245–Cys293. N-linked (GlcNAc...) asparagine glycans are attached at residues Asn309, Asn345, Asn360, Asn424, and Asn540. 3 disulfide bridges follow: Cys336–Cys375, Cys420–Cys465, and Cys512–Cys561. The helical transmembrane segment at Gly591–Ala609 threads the bilayer. The Cytoplasmic segment spans residues Lys610–Thr727. A lipid anchor (S-palmitoyl cysteine) is attached at Cys611. The disordered stretch occupies residues Ser642–Pro672. Short sequence motifs (ITIM motif) lie at residues Val677–Val682 and Thr700–Ile705. 2 positions are modified to phosphotyrosine; by FER: Tyr679 and Tyr702. The segment at Thr698–Ser718 is membrane-bound segment which detaches upon phosphorylation. The tract at residues Pro710–Thr727 is may play a role in cytoprotective signaling. Phosphoserine occurs at positions 718 and 723.

In terms of assembly, trans-homodimer (via Ig-like C2-type 1 and Ig-like C2-type 2 domains); trans-homodimerization is required for cell-cell interaction. Forms a complex with BDKRB2 and GNAQ. Interacts with BDKRB2 and GNAQ. Interacts with PTPN11; Tyr-702 is critical for PTPN11 recruitment. Interacts with FER. Interacts with CD177; the interaction is Ca(2+)-dependent; the interaction is direct. Phosphorylated on Ser and Tyr residues by src kinases after cellular activation. Upon activation, phosphorylated on Ser-718 which probably initiates the dissociation of the membrane-interaction segment (residues 698-718) from the cell membrane allowing the sequential phosphorylation of Tyr-702 and Tyr-679. Constitutively phosphorylated on Ser-723 in resting platelets. Phosphorylated on tyrosine residues by FER and FES in response to FCER1 activation. In endothelial cells Fyn mediates mechanical-force (stretch or pull) induced tyrosine phosphorylation. In terms of processing, palmitoylation by ZDHHC21 is necessary for cell surface expression in endothelial cells and enrichment in membrane rafts. In terms of tissue distribution, expressed in lung and platelets (at protein level).

The protein resides in the cell membrane. The protein localises to the membrane raft. It localises to the cell junction. Cell adhesion molecule which is required for leukocyte transendothelial migration (TEM) under most inflammatory conditions. Tyr-679 plays a critical role in TEM and is required for efficient trafficking of PECAM1 to and from the lateral border recycling compartment (LBRC) and is also essential for the LBRC membrane to be targeted around migrating leukocytes. Trans-homophilic interaction may play a role in endothelial cell-cell adhesion via cell junctions. Heterophilic interaction with CD177 plays a role in transendothelial migration of neutrophils. Homophilic ligation of PECAM1 prevents macrophage-mediated phagocytosis of neighboring viable leukocytes by transmitting a detachment signal. Promotes macrophage-mediated phagocytosis of apoptotic leukocytes by tethering them to the phagocytic cells; PECAM1-mediated detachment signal appears to be disabled in apoptotic leukocytes. Modulates bradykinin receptor BDKRB2 activation. Regulates bradykinin- and hyperosmotic shock-induced ERK1/2 activation in endothelial cells. Induces susceptibility to atherosclerosis. In Mus musculus (Mouse), this protein is Platelet endothelial cell adhesion molecule (Pecam1).